We begin with the raw amino-acid sequence, 530 residues long: Polyprotein pp62 (530 aa).

The protein belongs to the asfivirus polyprotein pp62 family. As to quaternary structure, monomer. Predominantly exists as a monomer, with very little dimers. Homodimerization seems to be linked to low pH. Homodimer; disulfide-linked. Homotrimer; disulfide-linked. Homohexamer. In terms of processing, monoubiquitinated in vitro by viral UBCv1. Specific enzymatic cleavages in vivo yield mature proteins.

The protein resides in the host cytoplasm. It localises to the host perinuclear region. The protein localises to the virion. Functionally, essential for the correct assembly and maturation of the core of the virion. Its function is as follows. Component of the core shell. Binds to phosphatidylserine, which may enable the core shell binding with the inner membrane. Component of the core shell. Binds to phosphatidylserine and DNA, which may link the core shell to the inner membrane and to the viral nucleoid. In terms of biological role, component of the core shell. The chain is Polyprotein pp62 from Ornithodoros (relapsing fever ticks).